The chain runs to 320 residues: MSAPEGLGDAHGDADRGDLSGDLRSVLVTSVLNLEPLDEDLYRGRHYWVPTSQRLFGGQIMGQALVAAAKSVSEDVHVHSLHCYFVRAGDPKVPVLYHVERIRTGASFSVRAVKAVQHGKAIFICQASFQQMQPSPLQHQFSMPSVPPPEDLLDHEALIDQYLRDPNLHKKYRVGLNRVAAQEVPIEIKVVNPPTLTQLQALEPKQMFWVRARGYIGEGDIKMHCCVAAYISDYAFLGTALLPHQSKYKVNFMASLDHSMWFHAPFRADHWMLYECESPWAGGSRGLVHGRLWRRDGVLAVTCAQEGVIRLKPQVSESKL.

Catalysis depends on charge relay system residues Asp-233, Ser-255, and Gln-305. Positions 318–320 (SKL) match the Microbody targeting signal motif.

It belongs to the C/M/P thioester hydrolase family. As to quaternary structure, homodimer. As to expression, ubiquitous.

The protein resides in the peroxisome matrix. It carries out the reaction choloyl-CoA + H2O = cholate + CoA + H(+). It catalyses the reaction chenodeoxycholoyl-CoA + H2O = chenodeoxycholate + CoA + H(+). The catalysed reaction is acetyl-CoA + H2O = acetate + CoA + H(+). The enzyme catalyses malonyl-CoA + H2O = malonate + CoA + H(+). It carries out the reaction acetoacetyl-CoA + H2O = acetoacetate + CoA + H(+). It catalyses the reaction propanoyl-CoA + H2O = propanoate + CoA + H(+). The catalysed reaction is butanoyl-CoA + H2O = butanoate + CoA + H(+). The enzyme catalyses succinyl-CoA + H2O = succinate + CoA + H(+). It carries out the reaction glutaryl-CoA + H2O = glutarate + CoA + H(+). It catalyses the reaction hexanoyl-CoA + H2O = hexanoate + CoA + H(+). The catalysed reaction is hexanedioyl-CoA + H2O = hexanedioate + CoA + H(+). The enzyme catalyses octanoyl-CoA + H2O = octanoate + CoA + H(+). It carries out the reaction octanedioyl-CoA + H2O = octanedioate + CoA + H(+). It catalyses the reaction decanoyl-CoA + H2O = decanoate + CoA + H(+). The catalysed reaction is decanedioyl-CoA + H2O = decanedioate + CoA + H(+). The enzyme catalyses dodecanoyl-CoA + H2O = dodecanoate + CoA + H(+). It carries out the reaction dodecanedioyl-CoA + H2O = dodecanedioate + CoA + H(+). It catalyses the reaction tetradecanoyl-CoA + H2O = tetradecanoate + CoA + H(+). The catalysed reaction is (9Z)-tetradecenoyl-CoA + H2O = (9Z)-tetradecenoate + CoA + H(+). The enzyme catalyses hexadecanoyl-CoA + H2O = hexadecanoate + CoA + H(+). It carries out the reaction (9Z)-hexadecenoyl-CoA + H2O = (9Z)-hexadecenoate + CoA + H(+). It catalyses the reaction octadecanoyl-CoA + H2O = octadecanoate + CoA + H(+). The catalysed reaction is (9Z)-octadecenoyl-CoA + H2O = (9Z)-octadecenoate + CoA + H(+). The enzyme catalyses (9Z,12Z)-octadecadienoyl-CoA + H2O = (9Z,12Z)-octadecadienoate + CoA + H(+). It carries out the reaction eicosanoyl-CoA + H2O = eicosanoate + CoA + H(+). It catalyses the reaction (5Z,8Z,11Z,14Z)-eicosatetraenoyl-CoA + H2O = (5Z,8Z,11Z,14Z)-eicosatetraenoate + CoA + H(+). The catalysed reaction is 4,8-dimethylnonanoyl-CoA + H2O = 4,8-dimethylnonanoate + CoA + H(+). The enzyme catalyses 2,6-dimethylheptanoyl-CoA + H2O = 2,6-dimethylheptanoate + CoA + H(+). It carries out the reaction (3S)-3-hydroxy-3-methylglutaryl-CoA + H2O = 3-hydroxy-3-methylglutarate + CoA + H(+). It catalyses the reaction 3alpha,7alpha,12alpha-trihydroxy-5beta-cholestan-26-oyl-CoA + H2O = 3alpha,7alpha,12alpha-trihydroxy-5beta-cholestan-26-oate + CoA + H(+). The catalysed reaction is 2-methyloctadecanoyl-CoA + H2O = 2-methyloctadecanoate + CoA + H(+). The enzyme catalyses prostaglandin F2alpha-CoA + H2O = prostaglandin F2alpha + CoA + H(+). It participates in lipid metabolism; fatty acid metabolism. With respect to regulation, inhibited by CoASH (IC(50)=10-15 uM). Also inhibited by cysteine-reactive agents. Its function is as follows. Catalyzes the hydrolysis of acyl-CoAs into free fatty acids and coenzyme A (CoASH), regulating their respective intracellular levels. Displays no strong substrate specificity with respect to the carboxylic acid moiety of Acyl-CoAs. Hydrolyzes medium length (C2 to C20) straight-chain, saturated and unsaturated acyl-CoAS but is inactive towards substrates with longer aliphatic chains. Moreover, it catalyzes the hydrolysis of CoA esters of bile acids, such as choloyl-CoA and chenodeoxycholoyl-CoA and competes with bile acid CoA:amino acid N-acyltransferase (BAAT). Is also able to hydrolyze CoA esters of dicarboxylic acids. It is involved in the metabolic regulation of peroxisome proliferation. The protein is Acyl-coenzyme A thioesterase 8 (Acot8) of Mus musculus (Mouse).